The following is a 422-amino-acid chain: MLDARYIRENLETVEARLKTRGEGVDIALFKELDGRRRELLQQSETLKALRNKVTEEIARLQDKSQAAERKTEMREVSQQIKGIDESLRSVEEELQNFLLTVPNVPNETTPIGRSEEDNVVVRTWGEVPALSFEPKPHWEIGEGLGILDFERGAKLAGARFTLYRGAGARLERALINYMLDLHIDEHKYIEMLPPFMVNRECMTGTGQLPKFEEDLFHMEGVDFFLIPTAEVPVTNIHRGEILKGSDLPISYVAYTPCFRKEAGSYGKDTRGLIRQHQFNKVELVKFTSPEDSYEQLQKLLGHAEEVLRRLQIPYRVVELCTGDIGFSAAKTFDIEVWLPGQNCYREISSCSCFEDFQARRAGIRFRPEEKAKPEFVHTLNGSGLAVGRTLVAVLENYQQADGSVLIPEVLRPYMGGAERIS.

229–231 (TAE) is an L-serine binding site. 260–262 (RKE) contacts ATP. Glu-283 is an L-serine binding site. ATP is bound at residue 347–350 (EISS). Ser-383 lines the L-serine pocket.

Belongs to the class-II aminoacyl-tRNA synthetase family. Type-1 seryl-tRNA synthetase subfamily. As to quaternary structure, homodimer. The tRNA molecule binds across the dimer.

Its subcellular location is the cytoplasm. It carries out the reaction tRNA(Ser) + L-serine + ATP = L-seryl-tRNA(Ser) + AMP + diphosphate + H(+). The enzyme catalyses tRNA(Sec) + L-serine + ATP = L-seryl-tRNA(Sec) + AMP + diphosphate + H(+). It participates in aminoacyl-tRNA biosynthesis; selenocysteinyl-tRNA(Sec) biosynthesis; L-seryl-tRNA(Sec) from L-serine and tRNA(Sec): step 1/1. Its function is as follows. Catalyzes the attachment of serine to tRNA(Ser). Is also able to aminoacylate tRNA(Sec) with serine, to form the misacylated tRNA L-seryl-tRNA(Sec), which will be further converted into selenocysteinyl-tRNA(Sec). In Geobacter sp. (strain M21), this protein is Serine--tRNA ligase.